A 371-amino-acid polypeptide reads, in one-letter code: MPLKPFAPSEPYTLGVELELQVVSPPGFNLSQDSSTLISALESRVTAGEVKHDITESMLEIATGVCRDINQVAAEFAAMQREILACAQQYHLMISGGGTHPFQKWQRQEVCSSERYARTLELFGYLIKQATVFGQHVHVGCRNGEEAMYLLHGLSRFVPHFVALSASSPYMQGADTGFASSRLNIFSAFPDNGPAPFAADWTQFEKMYARLEGTKVVESIKDLHWDIRPSPGFGTVEVRVMDTPLTLERAINIAGFIQAISHWLLDERPYKHKAEDYLIYRFNRFQACRYGLEGTLTDVSTGEQRTIGEDILRLLDKLERYARPLNASSALEAIHRYVKNNDSDVHRIREFTADGGSLSELVRLNGEIWAA.

It belongs to the glutamate--cysteine ligase type 2 family. YbdK subfamily. In terms of assembly, homodimer.

The catalysed reaction is L-cysteine + L-glutamate + ATP = gamma-L-glutamyl-L-cysteine + ADP + phosphate + H(+). Its function is as follows. ATP-dependent carboxylate-amine ligase which exhibits weak glutamate--cysteine ligase activity. The polypeptide is Putative glutamate--cysteine ligase 2 (Cronobacter sakazakii (strain ATCC BAA-894) (Enterobacter sakazakii)).